Reading from the N-terminus, the 155-residue chain is SsrA-binding protein (155 aa).

Residues 132–147 (KRESIKRREQDRDIKR) show a composition bias toward basic and acidic residues. A disordered region spans residues 132-155 (KRESIKRREQDRDIKRQMKQFNGR).

Belongs to the SmpB family.

The protein resides in the cytoplasm. In terms of biological role, required for rescue of stalled ribosomes mediated by trans-translation. Binds to transfer-messenger RNA (tmRNA), required for stable association of tmRNA with ribosomes. tmRNA and SmpB together mimic tRNA shape, replacing the anticodon stem-loop with SmpB. tmRNA is encoded by the ssrA gene; the 2 termini fold to resemble tRNA(Ala) and it encodes a 'tag peptide', a short internal open reading frame. During trans-translation Ala-aminoacylated tmRNA acts like a tRNA, entering the A-site of stalled ribosomes, displacing the stalled mRNA. The ribosome then switches to translate the ORF on the tmRNA; the nascent peptide is terminated with the 'tag peptide' encoded by the tmRNA and targeted for degradation. The ribosome is freed to recommence translation, which seems to be the essential function of trans-translation. This is SsrA-binding protein from Streptococcus mutans serotype c (strain ATCC 700610 / UA159).